The following is a 185-amino-acid chain: Ribosome-recycling factor (185 aa).

It belongs to the RRF family.

The protein localises to the cytoplasm. In terms of biological role, responsible for the release of ribosomes from messenger RNA at the termination of protein biosynthesis. May increase the efficiency of translation by recycling ribosomes from one round of translation to another. In Bacillus anthracis (strain CDC 684 / NRRL 3495), this protein is Ribosome-recycling factor.